The primary structure comprises 195 residues: Imidazoleglycerol-phosphate dehydratase (195 aa).

It belongs to the imidazoleglycerol-phosphate dehydratase family.

The protein localises to the cytoplasm. It catalyses the reaction D-erythro-1-(imidazol-4-yl)glycerol 3-phosphate = 3-(imidazol-4-yl)-2-oxopropyl phosphate + H2O. The protein operates within amino-acid biosynthesis; L-histidine biosynthesis; L-histidine from 5-phospho-alpha-D-ribose 1-diphosphate: step 6/9. This chain is Imidazoleglycerol-phosphate dehydratase, found in Burkholderia cenocepacia (strain HI2424).